The sequence spans 503 residues: Lysine--tRNA ligase (503 aa).

Mg(2+)-binding residues include E412 and E419.

It belongs to the class-II aminoacyl-tRNA synthetase family. In terms of assembly, homodimer. Mg(2+) is required as a cofactor.

The protein resides in the cytoplasm. The enzyme catalyses tRNA(Lys) + L-lysine + ATP = L-lysyl-tRNA(Lys) + AMP + diphosphate. This chain is Lysine--tRNA ligase, found in Idiomarina loihiensis (strain ATCC BAA-735 / DSM 15497 / L2-TR).